The primary structure comprises 112 residues: uncharacterized protein (112 aa).

Residues 82–104 traverse the membrane as a helical segment; that stretch reads IFFGFSIIASYFLKFHLLYVILL.

Its subcellular location is the membrane. This is an uncharacterized protein from Pasteurella multocida (strain Pm70).